The following is a 162-amino-acid chain: MNKIAIYPGTFDPITNGHVDLVERALNIFDEIVVAVSTAYGKNTLFDIRIREQMIKEVFKDNQRVKVVSFQGLLVDTAVKHNACAIVRGLRAVSDFDYEFQMSSMNNKLNSDIQTIFLTPSEKFSCISSTLVRAVAIHNYKRVDEFVPECVFREIKLKYSKE.

T10 contributes to the substrate binding site. ATP contacts are provided by residues 10-11 and H18; that span reads TF. The substrate site is built by K42, L74, and R88. ATP is bound by residues 89 to 91, E99, and 124 to 130; these read GLR and FSCISST.

This sequence belongs to the bacterial CoaD family. Homohexamer. The cofactor is Mg(2+).

It localises to the cytoplasm. It catalyses the reaction (R)-4'-phosphopantetheine + ATP + H(+) = 3'-dephospho-CoA + diphosphate. It functions in the pathway cofactor biosynthesis; coenzyme A biosynthesis; CoA from (R)-pantothenate: step 4/5. Functionally, reversibly transfers an adenylyl group from ATP to 4'-phosphopantetheine, yielding dephospho-CoA (dPCoA) and pyrophosphate. The polypeptide is Phosphopantetheine adenylyltransferase (Francisella tularensis subsp. novicida (strain U112)).